Reading from the N-terminus, the 549-residue chain is FERM domain-containing protein 1 (549 aa).

A disordered region spans residues 1–40; sequence MAVPPRGRGIDPARTNPDTFPPSGARCMEPSPERPACSQQ. The FERM domain maps to 54-369; that stretch reads RDVLVLLPSR…DELELDLASR (316 aa). Disordered regions lie at residues 377–400 and 422–464; these read SSQH…YTSG and HGLH…GQSA. The span at 430–443 shows a compositional bias: low complexity; it reads SSSPRTSRSHPSTR. Over residues 444-462 the composition is skewed to polar residues; it reads GDSQATRQEPCTQVRTRGQ.

The polypeptide is FERM domain-containing protein 1 (FRMD1) (Homo sapiens (Human)).